The chain runs to 67 residues: Large ribosomal subunit protein bL35 (67 aa).

A compositionally biased stretch (basic residues) spans 1–11 (MPKLKTRKAAA). The interval 1–22 (MPKLKTRKAAAKRFEATGSGKK) is disordered.

This sequence belongs to the bacterial ribosomal protein bL35 family.

The protein is Large ribosomal subunit protein bL35 of Microcystis aeruginosa (strain NIES-843 / IAM M-2473).